The sequence spans 327 residues: Ribose-phosphate pyrophosphokinase (327 aa).

ATP-binding positions include 40 to 42 (DGE) and 99 to 100 (RQ). The Mg(2+) site is built by histidine 134 and aspartate 173. Residue lysine 196 is part of the active site. Residues arginine 198, aspartate 222, and 226–230 (DTANT) contribute to the D-ribose 5-phosphate site.

The protein belongs to the ribose-phosphate pyrophosphokinase family. Class I subfamily. Homohexamer. Requires Mg(2+) as cofactor.

It localises to the cytoplasm. The enzyme catalyses D-ribose 5-phosphate + ATP = 5-phospho-alpha-D-ribose 1-diphosphate + AMP + H(+). It participates in metabolic intermediate biosynthesis; 5-phospho-alpha-D-ribose 1-diphosphate biosynthesis; 5-phospho-alpha-D-ribose 1-diphosphate from D-ribose 5-phosphate (route I): step 1/1. Involved in the biosynthesis of the central metabolite phospho-alpha-D-ribosyl-1-pyrophosphate (PRPP) via the transfer of pyrophosphoryl group from ATP to 1-hydroxyl of ribose-5-phosphate (Rib-5-P). The polypeptide is Ribose-phosphate pyrophosphokinase (Neisseria meningitidis serogroup A / serotype 4A (strain DSM 15465 / Z2491)).